The sequence spans 332 residues: Anthranilate phosphoribosyltransferase (332 aa).

Residues glycine 79, 82–83 (GD), threonine 87, 89–92 (NIST), 107–115 (KHGNRSVSS), and serine 119 contribute to the 5-phospho-alpha-D-ribose 1-diphosphate site. Glycine 79 lines the anthranilate pocket. Serine 91 contributes to the Mg(2+) binding site. Asparagine 110 serves as a coordination point for anthranilate. Arginine 165 is a binding site for anthranilate. Mg(2+) contacts are provided by aspartate 223 and glutamate 224.

This sequence belongs to the anthranilate phosphoribosyltransferase family. In terms of assembly, homodimer. The cofactor is Mg(2+).

It catalyses the reaction N-(5-phospho-beta-D-ribosyl)anthranilate + diphosphate = 5-phospho-alpha-D-ribose 1-diphosphate + anthranilate. Its pathway is amino-acid biosynthesis; L-tryptophan biosynthesis; L-tryptophan from chorismate: step 2/5. Its function is as follows. Catalyzes the transfer of the phosphoribosyl group of 5-phosphorylribose-1-pyrophosphate (PRPP) to anthranilate to yield N-(5'-phosphoribosyl)-anthranilate (PRA). This chain is Anthranilate phosphoribosyltransferase, found in Vibrio vulnificus (strain CMCP6).